Reading from the N-terminus, the 318-residue chain is Ribonuclease Z (318 aa).

His-62, His-64, Asp-66, His-67, His-140, Asp-211, and His-269 together coordinate Zn(2+). Asp-66 serves as the catalytic Proton acceptor.

It belongs to the RNase Z family. As to quaternary structure, homodimer. The cofactor is Zn(2+).

The catalysed reaction is Endonucleolytic cleavage of RNA, removing extra 3' nucleotides from tRNA precursor, generating 3' termini of tRNAs. A 3'-hydroxy group is left at the tRNA terminus and a 5'-phosphoryl group is left at the trailer molecule.. Its function is as follows. Zinc phosphodiesterase, which displays some tRNA 3'-processing endonuclease activity. Probably involved in tRNA maturation, by removing a 3'-trailer from precursor tRNA. The protein is Ribonuclease Z of Brevibacillus brevis (strain 47 / JCM 6285 / NBRC 100599).